The primary structure comprises 263 residues: Chymotrypsinogen B (263 aa).

Positions 1–18 (MAFLWLVSCFALVGATFG) are cleaved as a signal peptide. 5 disulfides stabilise this stretch: Cys19–Cys140, Cys60–Cys76, Cys154–Cys219, Cys186–Cys200, and Cys209–Cys238. One can recognise a Peptidase S1 domain in the interval 34-261 (IVNGEDAIPG…LMPWVQQILE (228 aa)). The active-site Charge relay system is the His75. The residue at position 93 (Ser93) is a Phosphoserine. Asp120 acts as the Charge relay system in catalysis. Ser213 functions as the Charge relay system in the catalytic mechanism.

This sequence belongs to the peptidase S1 family.

It is found in the secreted. The protein resides in the extracellular space. It carries out the reaction Preferential cleavage: Tyr-|-Xaa, Trp-|-Xaa, Phe-|-Xaa, Leu-|-Xaa.. The polypeptide is Chymotrypsinogen B (Ctrb1) (Rattus norvegicus (Rat)).